A 443-amino-acid polypeptide reads, in one-letter code: Toxin YjjJ (443 aa).

Asp-342 functions as the Proton acceptor in the catalytic mechanism.

It belongs to the HipA Ser/Thr kinase family.

Functionally, toxic when overexpressed in E.coli, leading to long filamentous cells. The toxic effect is neutralized by non-cognate antitoxin HipB. Does not seem to inhibit DNA, RNA or protein synthesis, and unlike paralogous toxin HipA its toxic activity is not counteracted by overexpression of GltX. Binds DNA. Might be a protein kinase. The protein is Toxin YjjJ (yjjJ) of Escherichia coli (strain K12).